The following is a 296-amino-acid chain: Probable AP endonuclease (296 aa).

The cysteines at positions 16 and 20 are disulfide-linked. Zn(2+) contacts are provided by histidine 78, histidine 115, glutamate 142, histidine 182, histidine 218, aspartate 231, histidine 233, and glutamate 271.

The protein belongs to the AP endonuclease 2 family. Zn(2+) serves as cofactor.

It is found in the host nucleus. It localises to the host cytoplasm. Its subcellular location is the virion. Endonuclease of the viral base excision repair system that catalyzes DNA cleavage reaction at the apurinic or apyrimidinic sites (AP sites). Cleaves phosphodiester bonds on the 5' side of AP sites. In addition to endonuclease activity, the AP endonuclease has a proofreading 3'-5' exonuclease activity that is considerably more efficient in the elimination of a mismatch than in that of a correctly paired base. Displays 3'-phosphatase and 3'-repair diesterase activities. The single nucleotide gaps generated by the AP endonuclease are filled by the viral repair DNA polymerase X and the DNA ligase. In Ornithodoros (relapsing fever ticks), this protein is Probable AP endonuclease.